The primary structure comprises 194 residues: Dof zinc finger protein DOF4.2 (194 aa).

The Dof-type zinc finger occupies 21–75; it reads RVCPRCYSDQTRFSYFNNNKKSQPRYKCKNCCRCWTHGGVLRNIPVTGICDKSNL. Zn(2+)-binding residues include cysteine 23, cysteine 26, cysteine 48, and cysteine 51.

It localises to the nucleus. Its function is as follows. Transcription factor that binds specifically to a 5'-AA[AG]G-3' consensus core sequence. The polypeptide is Dof zinc finger protein DOF4.2 (DOF4.2) (Arabidopsis thaliana (Mouse-ear cress)).